The chain runs to 273 residues: Undecaprenyl-diphosphatase (273 aa).

The next 7 membrane-spanning stretches (helical) occupy residues 39 to 59, 86 to 106, 117 to 137, 146 to 166, 189 to 209, 220 to 240, and 249 to 269; these read SGLT…VVYF, LPFL…LFET, LLIG…DLFG, VTVS…IPGV, FSFL…MLHL, LPLA…VAFL, and IAPF…VILT.

This sequence belongs to the UppP family.

The protein localises to the cell inner membrane. It carries out the reaction di-trans,octa-cis-undecaprenyl diphosphate + H2O = di-trans,octa-cis-undecaprenyl phosphate + phosphate + H(+). Catalyzes the dephosphorylation of undecaprenyl diphosphate (UPP). Confers resistance to bacitracin. This chain is Undecaprenyl-diphosphatase, found in Pelobacter propionicus (strain DSM 2379 / NBRC 103807 / OttBd1).